A 181-amino-acid chain; its full sequence is Putative ankyrin repeat protein RBE_0150 (181 aa).

ANK repeat units lie at residues 50 to 79 (IGQK…KLGT), 83 to 114 (LGRT…DINA), 118 to 147 (SGST…DYFT), and 151 to 180 (LGQT…AGYY).

The polypeptide is Putative ankyrin repeat protein RBE_0150 (Rickettsia bellii (strain RML369-C)).